Consider the following 292-residue polypeptide: Probable serine/threonine-protein kinase FPV226 (292 aa).

The Protein kinase domain occupies Trp14–Leu292. Residues Ile20–Val28 and Lys43 each bind ATP. The active-site Proton acceptor is the Asp147.

This sequence belongs to the protein kinase superfamily. Ser/Thr protein kinase family. Poxviruses subfamily.

The catalysed reaction is L-seryl-[protein] + ATP = O-phospho-L-seryl-[protein] + ADP + H(+). It catalyses the reaction L-threonyl-[protein] + ATP = O-phospho-L-threonyl-[protein] + ADP + H(+). The protein is Probable serine/threonine-protein kinase FPV226 of Vertebrata (FPV).